The sequence spans 706 residues: Methionine--tRNA ligase (706 aa).

Residues 13–23 (PYANGSIHLGH) carry the 'HIGH' region motif. The Zn(2+) site is built by C144, C147, C157, and C160. Residues 336-340 (KMSKS) carry the 'KMSKS' region motif. K339 contributes to the ATP binding site. A disordered region spans residues 570-593 (QQTMNTETESHSPQRHGQAQQHPV). The tRNA-binding domain maps to 604–706 (DFVKIDLRIA…SGAQPGMRVK (103 aa)).

The protein belongs to the class-I aminoacyl-tRNA synthetase family. MetG type 1 subfamily. Homodimer. It depends on Zn(2+) as a cofactor.

It is found in the cytoplasm. The catalysed reaction is tRNA(Met) + L-methionine + ATP = L-methionyl-tRNA(Met) + AMP + diphosphate. Is required not only for elongation of protein synthesis but also for the initiation of all mRNA translation through initiator tRNA(fMet) aminoacylation. The protein is Methionine--tRNA ligase of Nitrosomonas europaea (strain ATCC 19718 / CIP 103999 / KCTC 2705 / NBRC 14298).